The sequence spans 390 residues: tRNA(Met) cytidine acetate ligase (390 aa).

Residues 7–20 (VVEY…HKLH), G101, N162, and R187 contribute to the ATP site.

Belongs to the TmcAL family.

It localises to the cytoplasm. It carries out the reaction cytidine(34) in elongator tRNA(Met) + acetate + ATP = N(4)-acetylcytidine(34) in elongator tRNA(Met) + AMP + diphosphate. Its function is as follows. Catalyzes the formation of N(4)-acetylcytidine (ac(4)C) at the wobble position of elongator tRNA(Met), using acetate and ATP as substrates. First activates an acetate ion to form acetyladenylate (Ac-AMP) and then transfers the acetyl group to tRNA to form ac(4)C34. In Listeria monocytogenes serotype 4b (strain F2365), this protein is tRNA(Met) cytidine acetate ligase.